We begin with the raw amino-acid sequence, 450 residues long: tRNA modification GTPase MnmE (450 aa).

Residues Arg23, Glu80, and Arg123 each coordinate (6S)-5-formyl-5,6,7,8-tetrahydrofolate. A TrmE-type G domain is found at 219–372; the sequence is GLHVVLAGQP…LRARLLQMAG (154 aa). Residue Asn229 participates in K(+) binding. Residues 229–234, 248–254, and 273–276 each bind GTP; these read NVGKSS, TPIAGTT, and DTAG. Ser233 contacts Mg(2+). Residues Thr248, Ile250, and Thr253 each coordinate K(+). Thr254 contributes to the Mg(2+) binding site. Lys450 lines the (6S)-5-formyl-5,6,7,8-tetrahydrofolate pocket.

The protein belongs to the TRAFAC class TrmE-Era-EngA-EngB-Septin-like GTPase superfamily. TrmE GTPase family. In terms of assembly, homodimer. Heterotetramer of two MnmE and two MnmG subunits. The cofactor is K(+).

Its subcellular location is the cytoplasm. Exhibits a very high intrinsic GTPase hydrolysis rate. Involved in the addition of a carboxymethylaminomethyl (cmnm) group at the wobble position (U34) of certain tRNAs, forming tRNA-cmnm(5)s(2)U34. This Bordetella avium (strain 197N) protein is tRNA modification GTPase MnmE.